Consider the following 343-residue polypeptide: Glyceraldehyde-3-phosphate dehydrogenase 1 (343 aa).

NAD(+)-binding positions include 13 to 14, Asp35, Arg79, and Ser121; that span reads RI. Residues 154–156, Thr185, 214–215, and Arg237 contribute to the D-glyceraldehyde 3-phosphate site; these read SCT and TG. The active-site Nucleophile is the Cys155. Asn319 contacts NAD(+).

Belongs to the glyceraldehyde-3-phosphate dehydrogenase family. As to quaternary structure, homotetramer.

It localises to the cytoplasm. The catalysed reaction is D-glyceraldehyde 3-phosphate + phosphate + NAD(+) = (2R)-3-phospho-glyceroyl phosphate + NADH + H(+). It functions in the pathway carbohydrate degradation; glycolysis; pyruvate from D-glyceraldehyde 3-phosphate: step 1/5. Its function is as follows. Catalyzes the oxidative phosphorylation of glyceraldehyde 3-phosphate (G3P) to 1,3-bisphosphoglycerate (BPG) using the cofactor NAD. The first reaction step involves the formation of a hemiacetal intermediate between G3P and a cysteine residue, and this hemiacetal intermediate is then oxidized to a thioester, with concomitant reduction of NAD to NADH. The reduced NADH is then exchanged with the second NAD, and the thioester is attacked by a nucleophilic inorganic phosphate to produce BPG. The sequence is that of Glyceraldehyde-3-phosphate dehydrogenase 1 (gap1) from Trichormus variabilis (strain ATCC 29413 / PCC 7937) (Anabaena variabilis).